A 285-amino-acid chain; its full sequence is N(G),N(G)-dimethylarginine dimethylaminohydrolase 1 (285 aa).

A2 carries the N-acetylalanine modification. Residues L30, D73, E78, D79, R98, and R145 each contribute to the substrate site. Catalysis depends on H173, which acts as the Proton donor. Position 222 is an S-nitrosocysteine (C222). V268 lines the substrate pocket. C274 is subject to S-nitrosocysteine. C274 (nucleophile) is an active-site residue. Zn(2+) is bound at residue C274.

In terms of assembly, monomer. In terms of tissue distribution, widely distributed, highest concentrations found in brain, brain cortex and kidney (at protein level).

The catalysed reaction is N(omega),N(omega)-dimethyl-L-arginine + H2O = dimethylamine + L-citrulline. It carries out the reaction N(omega)-methyl-L-arginine + H2O = L-citrulline + methylamine. With respect to regulation, copurifies with a tightly bound zinc ion. Activated by release of zinc. His and other agents that promote the release of bound zinc ions activate the enzyme (in vitro). Inhibited by S-nitrosylation. Zinc protects the protein against S-nitrosylation. Its function is as follows. Hydrolyzes N(G),N(G)-dimethyl-L-arginine (ADMA) and N(G)-monomethyl-L-arginine (MMA) which act as inhibitors of NOS. Has therefore a role in the regulation of nitric oxide generation. The protein is N(G),N(G)-dimethylarginine dimethylaminohydrolase 1 (DDAH1) of Bos taurus (Bovine).